The following is a 323-amino-acid chain: tRNA U34 carboxymethyltransferase (323 aa).

Residues K91, W105, K110, G130, 152–154, 181–182, M196, Y200, and R315 each bind carboxy-S-adenosyl-L-methionine; these read DPT and IE.

This sequence belongs to the class I-like SAM-binding methyltransferase superfamily. CmoB family. In terms of assembly, homotetramer.

The catalysed reaction is carboxy-S-adenosyl-L-methionine + 5-hydroxyuridine(34) in tRNA = 5-carboxymethoxyuridine(34) in tRNA + S-adenosyl-L-homocysteine + H(+). Catalyzes carboxymethyl transfer from carboxy-S-adenosyl-L-methionine (Cx-SAM) to 5-hydroxyuridine (ho5U) to form 5-carboxymethoxyuridine (cmo5U) at position 34 in tRNAs. The protein is tRNA U34 carboxymethyltransferase of Shigella flexneri.